Here is a 420-residue protein sequence, read N- to C-terminus: Gamma-glutamyl phosphate reductase (420 aa).

The protein belongs to the gamma-glutamyl phosphate reductase family.

The protein resides in the cytoplasm. It carries out the reaction L-glutamate 5-semialdehyde + phosphate + NADP(+) = L-glutamyl 5-phosphate + NADPH + H(+). It functions in the pathway amino-acid biosynthesis; L-proline biosynthesis; L-glutamate 5-semialdehyde from L-glutamate: step 2/2. Catalyzes the NADPH-dependent reduction of L-glutamate 5-phosphate into L-glutamate 5-semialdehyde and phosphate. The product spontaneously undergoes cyclization to form 1-pyrroline-5-carboxylate. The sequence is that of Gamma-glutamyl phosphate reductase from Streptococcus pneumoniae (strain ATCC 700669 / Spain 23F-1).